The primary structure comprises 1399 residues: Dicer-like protein 2 (1399 aa).

The Helicase ATP-binding domain occupies 18–194 (MVEESMQSNI…EDLQQIERNL (177 aa)). 31–38 (MDTGSGKT) contacts ATP. The DEAH box motif lies at 139–142 (DEAH). In terms of domain architecture, Helicase C-terminal spans 364–549 (KLQLLIKFLV…QSETGHRNFE (186 aa)). Residues 562–656 (ASQHLHHFCS…LPARQEADDE (95 aa)) enclose the Dicer dsRNA-binding fold domain. 2 consecutive RNase III domains span residues 897–1054 (LPSI…TVGG) and 1094–1270 (LDVL…IDSL). Residues Glu1133, Asp1256, and Glu1259 each coordinate Mg(2+). The 70-residue stretch at 1301–1370 (HPKERLGHLA…AWKAVGVLES (70 aa)) folds into the DRBM domain.

Belongs to the helicase family. Dicer subfamily. Requires Mg(2+) as cofactor. The cofactor is Mn(2+).

Its function is as follows. Dicer-like endonuclease involved in cleaving double-stranded RNA in the RNA interference (RNAi) pathway. Produces 21 to 25 bp dsRNAs (siRNAs) which target the selective destruction of homologous RNAs leading to sequence-specific suppression of gene expression, called post-transcriptional gene silencing (PTGS). Part of a broad host defense response against viral infection and transposons. This is Dicer-like protein 2 (DCL2) from Phaeosphaeria nodorum (strain SN15 / ATCC MYA-4574 / FGSC 10173) (Glume blotch fungus).